We begin with the raw amino-acid sequence, 317 residues long: 4-diphosphocytidyl-2-C-methyl-D-erythritol kinase (317 aa).

Lys17 is an active-site residue. Residue 109 to 119 participates in ATP binding; sequence PVAGGMGGGSA. Asp151 is an active-site residue.

It belongs to the GHMP kinase family. IspE subfamily.

It carries out the reaction 4-CDP-2-C-methyl-D-erythritol + ATP = 4-CDP-2-C-methyl-D-erythritol 2-phosphate + ADP + H(+). It functions in the pathway isoprenoid biosynthesis; isopentenyl diphosphate biosynthesis via DXP pathway; isopentenyl diphosphate from 1-deoxy-D-xylulose 5-phosphate: step 3/6. Catalyzes the phosphorylation of the position 2 hydroxy group of 4-diphosphocytidyl-2C-methyl-D-erythritol. This is 4-diphosphocytidyl-2-C-methyl-D-erythritol kinase from Paenarthrobacter aurescens (strain TC1).